We begin with the raw amino-acid sequence, 124 residues long: Basic leucine zipper transcriptional factor ATF-like (124 aa).

A compositionally biased stretch (polar residues) spans 1 to 23 (MAQGSDNNDTSYTKSPSPGNKQG). The disordered stretch occupies residues 1 to 60 (MAQGSDNNDTSYTKSPSPGNKQGSSDDMRKVMRREKNRIAAQKSRMRQTQKADSLHLESE). The 64-residue stretch at 27 to 90 (DMRKVMRREK…KYLSTVLSNH (64 aa)) folds into the bZIP domain. The basic motif stretch occupies residues 29-51 (RKVMRREKNRIAAQKSRMRQTQK). The tract at residues 55–83 (LHLESESLEKENAALRKEVKRLTEEAKYL) is leucine-zipper.

The protein belongs to the bZIP family.

It is found in the nucleus. The protein localises to the cytoplasm. Functionally, AP-1 family transcription factor that controls the differentiation of lineage-specific cells in the immune system: specifically mediates the differentiation of T-helper 17 cells (Th17), follicular T-helper cells (TfH), CD8(+) dendritic cells and class-switch recombination (CSR) in B-cells. The protein is Basic leucine zipper transcriptional factor ATF-like (batf) of Danio rerio (Zebrafish).